Consider the following 512-residue polypeptide: Probable DNA ligase (512 aa).

Glutamate 208 is a binding site for ATP. Residue lysine 210 is the N6-AMP-lysine intermediate of the active site. ATP-binding residues include arginine 215, arginine 230, glutamate 259, phenylalanine 299, arginine 374, and lysine 380.

This sequence belongs to the ATP-dependent DNA ligase family. Requires Mg(2+) as cofactor.

It catalyses the reaction ATP + (deoxyribonucleotide)n-3'-hydroxyl + 5'-phospho-(deoxyribonucleotide)m = (deoxyribonucleotide)n+m + AMP + diphosphate.. Its function is as follows. DNA ligase that seals nicks in double-stranded DNA during DNA replication, DNA recombination and DNA repair. The chain is Probable DNA ligase from Streptomyces avermitilis (strain ATCC 31267 / DSM 46492 / JCM 5070 / NBRC 14893 / NCIMB 12804 / NRRL 8165 / MA-4680).